The following is a 229-amino-acid chain: Bcl-2-like protein 1 (229 aa).

A BH4 motif is present at residues 4–24 (SNRELVIDFVSYKLSQRGHCW). A BH3 motif is present at residues 82 to 96 (VRQALRDAGDEFELR). Positions 125–144 (ELFHDGVNWGRIVAFFSFGG) match the BH1 motif. A BH2 motif is present at residues 176–191 (PWIQENGGWERFVDLY). A helical transmembrane segment spans residues 206–223 (FNKWLLTGATVAGVLLLG).

Belongs to the Bcl-2 family. Highest expression in organs with lymphoid development.

Its subcellular location is the mitochondrion membrane. It is found in the nucleus membrane. The protein localises to the mitochondrion matrix. It localises to the cytoplasm. The protein resides in the cytoskeleton. Its subcellular location is the microtubule organizing center. It is found in the centrosome. The protein localises to the cytosol. It localises to the cytoplasmic vesicle. The protein resides in the secretory vesicle. Its subcellular location is the synaptic vesicle membrane. Dominant regulator of apoptotic cell death. The long form displays cell death repressor activity, whereas the short isoform promotes apoptosis. Also acts as a regulator of G2 checkpoint and progression to cytokinesis during mitosis. This chain is Bcl-2-like protein 1 (BCL2L1), found in Gallus gallus (Chicken).